We begin with the raw amino-acid sequence, 418 residues long: 3-isopropylmalate dehydratase large subunit 1 (418 aa).

Residues cysteine 298, cysteine 358, and cysteine 361 each contribute to the [4Fe-4S] cluster site.

This sequence belongs to the aconitase/IPM isomerase family. LeuC type 2 subfamily. As to quaternary structure, heterodimer of LeuC and LeuD. Requires [4Fe-4S] cluster as cofactor.

The catalysed reaction is (2R,3S)-3-isopropylmalate = (2S)-2-isopropylmalate. It functions in the pathway amino-acid biosynthesis; L-leucine biosynthesis; L-leucine from 3-methyl-2-oxobutanoate: step 2/4. Functionally, catalyzes the isomerization between 2-isopropylmalate and 3-isopropylmalate, via the formation of 2-isopropylmaleate. This Thermotoga maritima (strain ATCC 43589 / DSM 3109 / JCM 10099 / NBRC 100826 / MSB8) protein is 3-isopropylmalate dehydratase large subunit 1.